We begin with the raw amino-acid sequence, 388 residues long: Dual-specificity RNA methyltransferase RlmN (388 aa).

The active-site Proton acceptor is the Glu-109. The Radical SAM core domain occupies 115–354 (EDDRATLCVS…TIVRKTRGDD (240 aa)). Residues Cys-122 and Cys-359 are joined by a disulfide bond. Cys-129, Cys-133, and Cys-136 together coordinate [4Fe-4S] cluster. S-adenosyl-L-methionine-binding positions include 183 to 184 (GE), Ser-215, 237 to 239 (SLH), and Asn-316. Cys-359 serves as the catalytic S-methylcysteine intermediate.

Belongs to the radical SAM superfamily. RlmN family. It depends on [4Fe-4S] cluster as a cofactor.

The protein resides in the cytoplasm. The enzyme catalyses adenosine(2503) in 23S rRNA + 2 reduced [2Fe-2S]-[ferredoxin] + 2 S-adenosyl-L-methionine = 2-methyladenosine(2503) in 23S rRNA + 5'-deoxyadenosine + L-methionine + 2 oxidized [2Fe-2S]-[ferredoxin] + S-adenosyl-L-homocysteine. It catalyses the reaction adenosine(37) in tRNA + 2 reduced [2Fe-2S]-[ferredoxin] + 2 S-adenosyl-L-methionine = 2-methyladenosine(37) in tRNA + 5'-deoxyadenosine + L-methionine + 2 oxidized [2Fe-2S]-[ferredoxin] + S-adenosyl-L-homocysteine. Specifically methylates position 2 of adenine 2503 in 23S rRNA and position 2 of adenine 37 in tRNAs. m2A2503 modification seems to play a crucial role in the proofreading step occurring at the peptidyl transferase center and thus would serve to optimize ribosomal fidelity. The polypeptide is Dual-specificity RNA methyltransferase RlmN (Salmonella typhi).